Here is a 184-residue protein sequence, read N- to C-terminus: Large ribosomal subunit protein uL5 (184 aa).

The protein belongs to the universal ribosomal protein uL5 family. In terms of assembly, part of the 50S ribosomal subunit; part of the 5S rRNA/L5/L18/L25 subcomplex. Contacts the 5S rRNA and the P site tRNA. Forms a bridge to the 30S subunit in the 70S ribosome.

Functionally, this is one of the proteins that bind and probably mediate the attachment of the 5S RNA into the large ribosomal subunit, where it forms part of the central protuberance. In the 70S ribosome it contacts protein S13 of the 30S subunit (bridge B1b), connecting the 2 subunits; this bridge is implicated in subunit movement. Contacts the P site tRNA; the 5S rRNA and some of its associated proteins might help stabilize positioning of ribosome-bound tRNAs. In Wolinella succinogenes (strain ATCC 29543 / DSM 1740 / CCUG 13145 / JCM 31913 / LMG 7466 / NCTC 11488 / FDC 602W) (Vibrio succinogenes), this protein is Large ribosomal subunit protein uL5.